The following is a 372-amino-acid chain: MTFDSANASKPLSVVLAGGGTAGHVSPLLAIADAIREKRPEAAILAVGTPSGMETRLVPAAGYELATIDRVPFPRRPSADLVKLPARLSGAVRQARRILEEARADVLVGVGGYVCTPMYLAARKLRIPIVIHEANMKAGLANRVGARFSNHVAVAFAGTRLRGARHVGMPMRRAISGLDRAVAAPAARAALGLDAQRPALIVTGGSSGALSINRAITAALPALAAAGVQTLHITGNGKAVKDDDGGLLTADGYRQVEYVDGMENVYAAADVLLARAGAGTVSEVAAVGVPAVFVPLPIGNGEQALNAAPLVAAGGAVMVDDKDLSPEWLRSELIPLLTDRSRLNEMARKSEALGIRNADQRMADLVLEAVSA.

UDP-N-acetyl-alpha-D-glucosamine-binding positions include Thr-21–Gly-23, Asn-135, Arg-172, Ser-206, and Gln-303.

The protein belongs to the glycosyltransferase 28 family. MurG subfamily.

It is found in the cell membrane. The catalysed reaction is di-trans,octa-cis-undecaprenyl diphospho-N-acetyl-alpha-D-muramoyl-L-alanyl-D-glutamyl-meso-2,6-diaminopimeloyl-D-alanyl-D-alanine + UDP-N-acetyl-alpha-D-glucosamine = di-trans,octa-cis-undecaprenyl diphospho-[N-acetyl-alpha-D-glucosaminyl-(1-&gt;4)]-N-acetyl-alpha-D-muramoyl-L-alanyl-D-glutamyl-meso-2,6-diaminopimeloyl-D-alanyl-D-alanine + UDP + H(+). Its pathway is cell wall biogenesis; peptidoglycan biosynthesis. In terms of biological role, cell wall formation. Catalyzes the transfer of a GlcNAc subunit on undecaprenyl-pyrophosphoryl-MurNAc-pentapeptide (lipid intermediate I) to form undecaprenyl-pyrophosphoryl-MurNAc-(pentapeptide)GlcNAc (lipid intermediate II). This is UDP-N-acetylglucosamine--N-acetylmuramyl-(pentapeptide) pyrophosphoryl-undecaprenol N-acetylglucosamine transferase from Paenarthrobacter aurescens (strain TC1).